A 755-amino-acid chain; its full sequence is Anaphase-promoting complex subunit 5 (755 aa).

S195 is subject to Phosphoserine. TPR repeat units lie at residues 209–249 (QKQA…FNPD), 250–300 (FAEA…GRSL), 301–337 (RYAA…SNDH), 338–378 (VCLQ…YLAS), 379–418 (LGIQ…SELI), 419–466 (DISI…TESF), 467–500 (AVAL…FPPN), 501–540 (SQHA…ALNS), 541–580 (IEGV…TEMV), 581–620 (ISVL…QYLA), 621–660 (SETV…ILDK), 661–696 (GRAM…NLNE), and 697–736 (AKNY…CAML). The residue at position 232 (T232) is a Phosphothreonine.

Belongs to the APC5 family. As to quaternary structure, the mammalian APC/C is composed at least of 14 distinct subunits ANAPC1, ANAPC2, CDC27/APC3, ANAPC4, ANAPC5, CDC16/APC6, ANAPC7, CDC23/APC8, ANAPC10, ANAPC11, CDC26/APC12, ANAPC13, ANAPC15 and ANAPC16 that assemble into a complex of at least 19 chains with a combined molecular mass of around 1.2 MDa; APC/C interacts with FZR1 and FBXO5.

The protein localises to the nucleus. The protein resides in the cytoplasm. Its subcellular location is the cytoskeleton. It is found in the spindle. It functions in the pathway protein modification; protein ubiquitination. In terms of biological role, component of the anaphase promoting complex/cyclosome (APC/C), a cell cycle-regulated E3 ubiquitin ligase that controls progression through mitosis and the G1 phase of the cell cycle. The APC/C complex acts by mediating ubiquitination and subsequent degradation of target proteins: it mainly mediates the formation of 'Lys-11'-linked polyubiquitin chains and, to a lower extent, the formation of 'Lys-48'- and 'Lys-63'-linked polyubiquitin chains. The APC/C complex catalyzes assembly of branched 'Lys-11'-/'Lys-48'-linked branched ubiquitin chains on target proteins. In Homo sapiens (Human), this protein is Anaphase-promoting complex subunit 5 (ANAPC5).